The sequence spans 317 residues: D-alanine--D-alanine ligase (317 aa).

The ATP-grasp domain occupies Lys-103–Glu-299. Lys-130–His-183 contacts ATP. Residues Asp-251, Glu-265, and Asn-267 each coordinate Mg(2+).

The protein belongs to the D-alanine--D-alanine ligase family. It depends on Mg(2+) as a cofactor. Mn(2+) serves as cofactor.

The protein localises to the cytoplasm. It catalyses the reaction 2 D-alanine + ATP = D-alanyl-D-alanine + ADP + phosphate + H(+). It participates in cell wall biogenesis; peptidoglycan biosynthesis. Functionally, cell wall formation. This Wolbachia pipientis subsp. Culex pipiens (strain wPip) protein is D-alanine--D-alanine ligase.